The following is a 128-amino-acid chain: Fluoride-specific ion channel FluC (128 aa).

4 helical membrane passes run L4–Q24, T37–L57, V72–I92, and F101–I121. The Na(+) site is built by G76 and T79.

It belongs to the fluoride channel Fluc/FEX (TC 1.A.43) family.

Its subcellular location is the cell inner membrane. The catalysed reaction is fluoride(in) = fluoride(out). Its activity is regulated as follows. Na(+) is not transported, but it plays an essential structural role and its presence is essential for fluoride channel function. Its function is as follows. Fluoride-specific ion channel. Important for reducing fluoride concentration in the cell, thus reducing its toxicity. The sequence is that of Fluoride-specific ion channel FluC from Caulobacter sp. (strain K31).